Here is a 468-residue protein sequence, read N- to C-terminus: Probable multidrug resistance protein NorM (468 aa).

The next 11 helical transmembrane spans lie at 57–79 (LAAG…GVLT), 100–122 (IYWT…LSFA), 142–164 (YAAV…RSFL), 173–195 (LLWV…IHGA), 205–227 (GSAT…LLHG), 248–270 (LFGI…LATG), 280–302 (SLAA…LAIG), 323–345 (HAGF…VLIV), 360–382 (PANA…FQIV), 401–423 (VPML…WFAF), and 433–452 (WWGL…WRFH).

The protein belongs to the multi antimicrobial extrusion (MATE) (TC 2.A.66.1) family.

The protein localises to the cell inner membrane. Its function is as follows. Multidrug efflux pump. The protein is Probable multidrug resistance protein NorM (norM) of Burkholderia mallei (strain ATCC 23344).